Here is a 447-residue protein sequence, read N- to C-terminus: Trigger factor (447 aa).

In terms of domain architecture, PPIase FKBP-type spans 164-249 (GDLVVIDFIG…VKEVKQAVVP (86 aa)).

This sequence belongs to the FKBP-type PPIase family. Tig subfamily.

It is found in the cytoplasm. It catalyses the reaction [protein]-peptidylproline (omega=180) = [protein]-peptidylproline (omega=0). Functionally, involved in protein export. Acts as a chaperone by maintaining the newly synthesized protein in an open conformation. Functions as a peptidyl-prolyl cis-trans isomerase. This Rhodospirillum rubrum (strain ATCC 11170 / ATH 1.1.1 / DSM 467 / LMG 4362 / NCIMB 8255 / S1) protein is Trigger factor.